Reading from the N-terminus, the 375-residue chain is Succinyl-diaminopimelate desuccinylase (375 aa).

H66 contacts Zn(2+). Residue D68 is part of the active site. D99 provides a ligand contact to Zn(2+). The active-site Proton acceptor is E133. Positions 134, 162, and 348 each coordinate Zn(2+).

Belongs to the peptidase M20A family. DapE subfamily. Homodimer. It depends on Zn(2+) as a cofactor. Co(2+) serves as cofactor.

It carries out the reaction N-succinyl-(2S,6S)-2,6-diaminopimelate + H2O = (2S,6S)-2,6-diaminopimelate + succinate. Its pathway is amino-acid biosynthesis; L-lysine biosynthesis via DAP pathway; LL-2,6-diaminopimelate from (S)-tetrahydrodipicolinate (succinylase route): step 3/3. Catalyzes the hydrolysis of N-succinyl-L,L-diaminopimelic acid (SDAP), forming succinate and LL-2,6-diaminopimelate (DAP), an intermediate involved in the bacterial biosynthesis of lysine and meso-diaminopimelic acid, an essential component of bacterial cell walls. In Klebsiella pneumoniae subsp. pneumoniae (strain ATCC 700721 / MGH 78578), this protein is Succinyl-diaminopimelate desuccinylase.